Here is a 753-residue protein sequence, read N- to C-terminus: Probable TonB-dependent siderophore receptor PiuA (753 aa).

The first 35 residues, 1 to 35 (MSRQSTDTAVSSQRLLASAIGVAITAIAAPQAAQA), serve as a signal peptide directing secretion. Positions 79–185 (PLLDTPKTVT…TGGSLNLISK (107 aa)) constitute a TBDR plug domain. A TBDR beta-barrel domain is found at 190–753 (DNFTDAGFTW…TALLGVNFHF (564 aa)). Cysteines 420 and 430 form a disulfide.

The protein belongs to the TonB-dependent receptor family.

It is found in the cell outer membrane. Functionally, involved in the initial step of iron uptake by binding iron chelating siderophores, thereby allowing extraction of iron from the environment. Probably involved in the transport of siderophores, including host catecholamines such as dopamine. The sequence is that of Probable TonB-dependent siderophore receptor PiuA from Pseudomonas aeruginosa (strain ATCC 15692 / DSM 22644 / CIP 104116 / JCM 14847 / LMG 12228 / 1C / PRS 101 / PAO1).